The following is a 592-amino-acid chain: Transcription factor MYC3 (592 aa).

The segment at 82–141 (STGDNTVILGWGDGYYKGEEDKEKKKNNTNTAEQEHRKRVIRELNSLISGGIGVSDESND) is JAZ-interaction domain. Disordered regions lie at residues 261 to 313 (ENDP…VENQ), 341 to 361 (CGNESSKKRTSVSKGSNNDEG), 393 to 422 (EPPEKKPRKRGRKPANGREEPLNHVEAERQ), and 465 to 508 (QQAE…STAS). Residues 278–293 (SPARVNNGNNSNSNSK) are compositionally biased toward low complexity. The span at 294 to 306 (SDSHQISKLEKND) shows a compositional bias: basic and acidic residues. Over residues 352–361 (VSKGSNNDEG) the composition is skewed to polar residues. Residues 398-407 (KPRKRGRKPA) are compositionally biased toward basic residues. Composition is skewed to basic and acidic residues over residues 408-422 (NGREEPLNHVEAERQ) and 468-482 (ESDKEEIQKKLDGMS). The 50-residue stretch at 411–460 (EEPLNHVEAERQRREKLNQRFYSLRAVVPNVSKMDKASLLGDAISYINEL) folds into the bHLH domain.

Homo- and heterodimer. Interacts with MYB28, MYB29, MYB34, MYB51, MYB76, MYB122, MYC2, MYC4, AFPH2/NINJA and the JAZ repressors TIFY10A/JAZ1, TIFY10B/JAZ2, TIFY6B/JAZ3, TIFY11A/JAZ5, TIFY11B/JAZ6, TIFY5B/JAZ7, TIFY5A/JAZ8, TIFY7/JAZ9, TIFY9/JAZ10, TIFY3A/JAZ11 and TIFY3B/JAZ12. Constitutively expressed in roots, stems, leaves, flowers, and seedlings.

It localises to the nucleus. Functionally, transcription factor involved in tryptophan, jasmonic acid (JA) and other stress-responsive gene regulation. With MYC2 and MYC4, controls additively subsets of JA-dependent responses. Can form complexes with all known glucosinolate-related MYBs to regulate glucosinolate biosynthesis. Binds to the G-box (5'-CACGTG-3') of promoters. Activates multiple TIFY/JAZ promoters. This chain is Transcription factor MYC3 (MYC3), found in Arabidopsis thaliana (Mouse-ear cress).